A 267-amino-acid chain; its full sequence is 4-hydroxy-tetrahydrodipicolinate reductase (267 aa).

Residues 8–13 (GAAGRM) and Asp-34 contribute to the NAD(+) site. Arg-35 contacts NADP(+). NAD(+) is bound by residues 98-100 (GTT) and 122-125 (AANF). His-155 serves as the catalytic Proton donor/acceptor. Residue His-156 participates in (S)-2,3,4,5-tetrahydrodipicolinate binding. Residue Lys-159 is the Proton donor of the active site. 165–166 (GT) contacts (S)-2,3,4,5-tetrahydrodipicolinate.

It belongs to the DapB family.

It is found in the cytoplasm. The catalysed reaction is (S)-2,3,4,5-tetrahydrodipicolinate + NAD(+) + H2O = (2S,4S)-4-hydroxy-2,3,4,5-tetrahydrodipicolinate + NADH + H(+). It carries out the reaction (S)-2,3,4,5-tetrahydrodipicolinate + NADP(+) + H2O = (2S,4S)-4-hydroxy-2,3,4,5-tetrahydrodipicolinate + NADPH + H(+). It functions in the pathway amino-acid biosynthesis; L-lysine biosynthesis via DAP pathway; (S)-tetrahydrodipicolinate from L-aspartate: step 4/4. In terms of biological role, catalyzes the conversion of 4-hydroxy-tetrahydrodipicolinate (HTPA) to tetrahydrodipicolinate. The sequence is that of 4-hydroxy-tetrahydrodipicolinate reductase from Pseudomonas putida (strain ATCC 47054 / DSM 6125 / CFBP 8728 / NCIMB 11950 / KT2440).